We begin with the raw amino-acid sequence, 335 residues long: Lipoyl synthase (335 aa).

Residues M1 to S13 are compositionally biased toward polar residues. A disordered region spans residues M1–T29. Residues C75, C80, C86, C101, C105, C108, and S315 each contribute to the [4Fe-4S] cluster site. The Radical SAM core domain maps to C86–A304.

Belongs to the radical SAM superfamily. Lipoyl synthase family. It depends on [4Fe-4S] cluster as a cofactor.

It localises to the cytoplasm. The catalysed reaction is [[Fe-S] cluster scaffold protein carrying a second [4Fe-4S](2+) cluster] + N(6)-octanoyl-L-lysyl-[protein] + 2 oxidized [2Fe-2S]-[ferredoxin] + 2 S-adenosyl-L-methionine + 4 H(+) = [[Fe-S] cluster scaffold protein] + N(6)-[(R)-dihydrolipoyl]-L-lysyl-[protein] + 4 Fe(3+) + 2 hydrogen sulfide + 2 5'-deoxyadenosine + 2 L-methionine + 2 reduced [2Fe-2S]-[ferredoxin]. It functions in the pathway protein modification; protein lipoylation via endogenous pathway; protein N(6)-(lipoyl)lysine from octanoyl-[acyl-carrier-protein]: step 2/2. Functionally, catalyzes the radical-mediated insertion of two sulfur atoms into the C-6 and C-8 positions of the octanoyl moiety bound to the lipoyl domains of lipoate-dependent enzymes, thereby converting the octanoylated domains into lipoylated derivatives. The sequence is that of Lipoyl synthase from Herminiimonas arsenicoxydans.